The sequence spans 92 residues: Small ribosomal subunit protein uS19c (92 aa).

Belongs to the universal ribosomal protein uS19 family.

It is found in the plastid. Its subcellular location is the chloroplast. Functionally, protein S19 forms a complex with S13 that binds strongly to the 16S ribosomal RNA. The sequence is that of Small ribosomal subunit protein uS19c from Platanus occidentalis (Sycamore).